The following is a 314-amino-acid chain: Serine/threonine-protein phosphatase PP2A-4 catalytic subunit (314 aa).

Mn(2+) is bound by residues aspartate 62, histidine 64, aspartate 90, and asparagine 122. The active-site Proton donor is histidine 123. 2 residues coordinate Mn(2+): histidine 172 and histidine 246.

The protein belongs to the PPP phosphatase family. PP-2A subfamily. Requires Mn(2+) as cofactor.

It is found in the cytoplasm. The catalysed reaction is O-phospho-L-seryl-[protein] + H2O = L-seryl-[protein] + phosphate. It carries out the reaction O-phospho-L-threonyl-[protein] + H2O = L-threonyl-[protein] + phosphate. This chain is Serine/threonine-protein phosphatase PP2A-4 catalytic subunit (PP2A4), found in Oryza sativa subsp. japonica (Rice).